The following is a 76-amino-acid chain: UPF0291 protein GWCH70_1239 (76 aa).

The tract at residues 54 to 76 (VIDPNGNDVTPKKLKESQKSRLH) is disordered. Residues 63 to 76 (TPKKLKESQKSRLH) show a composition bias toward basic and acidic residues.

It belongs to the UPF0291 family.

The protein resides in the cytoplasm. This chain is UPF0291 protein GWCH70_1239, found in Geobacillus sp. (strain WCH70).